Here is a 113-residue protein sequence, read N- to C-terminus: Endoribonuclease SymE (113 aa).

The region spanning 29 to 74 (SRYPDYSRIPAITLKGQWLEAAGFATGTAVDVKVMEGCIVLTAQPA) is the SpoVT-AbrB domain.

It belongs to the SymE family.

It is found in the cytoplasm. In terms of biological role, involved in the degradation and recycling of damaged RNA. It is itself a target for degradation by the ATP-dependent protease Lon. This Shigella flexneri serotype 5b (strain 8401) protein is Endoribonuclease SymE.